We begin with the raw amino-acid sequence, 259 residues long: MSASVQPVLKAESKNLNFYYGDFKALKGISLPVHDKRITALIGPSGCGKSTFLRCFNRMHDLYPGNRYDGEITLNPDGVNILSPKVDPIEVRMRISMVFQKPNPFPKSIFENVAYGLRVRGISKRSVLEEKVEEALTNAAIWNEVKDRLSDLAFNLSGGQQQRLCIARALAIDPEIMLFDEPTSALDPIATANIEELMAELKERFTILIVTHNMQQAARVSDFTAFLYLGEVVEFNDTKKIFTTPDNPRTEDYITGRFG.

Positions 11 to 254 (AESKNLNFYY…PDNPRTEDYI (244 aa)) constitute an ABC transporter domain. 43–50 (GPSGCGKS) lines the ATP pocket.

The protein belongs to the ABC transporter superfamily. Phosphate importer (TC 3.A.1.7) family. The complex is composed of two ATP-binding proteins (PstB), two transmembrane proteins (PstC and PstA) and a solute-binding protein (PstS).

It is found in the cell inner membrane. The enzyme catalyses phosphate(out) + ATP + H2O = ADP + 2 phosphate(in) + H(+). Its function is as follows. Part of the ABC transporter complex PstSACB involved in phosphate import. Responsible for energy coupling to the transport system. This chain is Phosphate import ATP-binding protein PstB, found in Geobacter sulfurreducens (strain ATCC 51573 / DSM 12127 / PCA).